A 151-amino-acid polypeptide reads, in one-letter code: Putative pre-16S rRNA nuclease (151 aa).

The protein belongs to the YqgF nuclease family.

It is found in the cytoplasm. In terms of biological role, could be a nuclease involved in processing of the 5'-end of pre-16S rRNA. The chain is Putative pre-16S rRNA nuclease from Nitrosospira multiformis (strain ATCC 25196 / NCIMB 11849 / C 71).